The primary structure comprises 131 residues: Profilin (131 aa).

Belongs to the profilin family. As to quaternary structure, occurs in many kinds of cells as a complex with monomeric actin in a 1:1 ratio.

It is found in the cytoplasm. The protein resides in the cytoskeleton. Its function is as follows. Binds to actin and affects the structure of the cytoskeleton. At high concentrations, profilin prevents the polymerization of actin, whereas it enhances it at low concentrations. Has a high affinity for poly-proline. The protein is Profilin of Citrullus lanatus (Watermelon).